The primary structure comprises 558 residues: Glucose-6-phosphate isomerase (558 aa).

Ala2 is modified (N-acetylalanine). Lys12 is subject to N6-acetyllysine. Ser86 and Ser107 each carry phosphoserine. Lys142 carries the post-translational modification N6-acetyllysine. Residue 159–160 (GS) coordinates D-glucose 6-phosphate. Ser185 carries the phosphoserine; by CK2 modification. A D-glucose 6-phosphate-binding site is contributed by 210–215 (SKTFTT). At Thr250 the chain carries Phosphothreonine. Gln354, Glu358, and His389 together coordinate D-glucose 6-phosphate. The active-site Proton donor is the Glu358. The active site involves His389. Position 454 is an N6-acetyllysine; alternate (Lys454). Lys454 is subject to N6-malonyllysine; alternate. Position 454 is an N6-succinyllysine; alternate (Lys454). Ser455 carries the post-translational modification Phosphoserine. Lys519 lines the D-glucose 6-phosphate pocket. Residue Lys519 is part of the active site.

This sequence belongs to the GPI family. Homodimer; in the catalytically active form. Monomer in the secreted form. In terms of processing, phosphorylation at Ser-185 by CK2 has been shown to decrease enzymatic activity and may contribute to secretion by a non-classical secretory pathway. Post-translationally, ISGylated.

Its subcellular location is the cytoplasm. The protein resides in the secreted. The enzyme catalyses alpha-D-glucose 6-phosphate = beta-D-fructose 6-phosphate. Its pathway is carbohydrate degradation; glycolysis; D-glyceraldehyde 3-phosphate and glycerone phosphate from D-glucose: step 2/4. In terms of biological role, in the cytoplasm, catalyzes the conversion of glucose-6-phosphate to fructose-6-phosphate, the second step in glycolysis, and the reverse reaction during gluconeogenesis. Besides it's role as a glycolytic enzyme, also acts as a secreted cytokine: acts as an angiogenic factor (AMF) that stimulates endothelial cell motility. Acts as a neurotrophic factor, neuroleukin, for spinal and sensory neurons. It is secreted by lectin-stimulated T-cells and induces immunoglobulin secretion. This Rattus norvegicus (Rat) protein is Glucose-6-phosphate isomerase.